A 435-amino-acid polypeptide reads, in one-letter code: 3-phosphoshikimate 1-carboxyvinyltransferase (435 aa).

Positions 23, 24, and 28 each coordinate 3-phosphoshikimate. K23 is a binding site for phosphoenolpyruvate. Positions 97 and 125 each coordinate phosphoenolpyruvate. Residues S170, S171, Q172, S198, D314, N338, and K342 each coordinate 3-phosphoshikimate. Phosphoenolpyruvate is bound at residue Q172. The active-site Proton acceptor is D314. R346, R388, and K413 together coordinate phosphoenolpyruvate.

It belongs to the EPSP synthase family. Monomer.

It localises to the cytoplasm. The enzyme catalyses 3-phosphoshikimate + phosphoenolpyruvate = 5-O-(1-carboxyvinyl)-3-phosphoshikimate + phosphate. The protein operates within metabolic intermediate biosynthesis; chorismate biosynthesis; chorismate from D-erythrose 4-phosphate and phosphoenolpyruvate: step 6/7. In terms of biological role, catalyzes the transfer of the enolpyruvyl moiety of phosphoenolpyruvate (PEP) to the 5-hydroxyl of shikimate-3-phosphate (S3P) to produce enolpyruvyl shikimate-3-phosphate and inorganic phosphate. This is 3-phosphoshikimate 1-carboxyvinyltransferase from Sodalis glossinidius (strain morsitans).